A 129-amino-acid chain; its full sequence is Glycine cleavage system H protein (129 aa).

In terms of domain architecture, Lipoyl-binding spans 24-106 (AVRIGLSAYA…HGEGWLLVIQ (83 aa)). Position 65 is an N6-lipoyllysine (K65).

The protein belongs to the GcvH family. The glycine cleavage system is composed of four proteins: P, T, L and H. It depends on (R)-lipoate as a cofactor.

Functionally, the glycine cleavage system catalyzes the degradation of glycine. The H protein shuttles the methylamine group of glycine from the P protein to the T protein. This chain is Glycine cleavage system H protein, found in Synechococcus sp. (strain WH7803).